Reading from the N-terminus, the 312-residue chain is Protoheme IX farnesyltransferase (312 aa).

8 helical membrane passes run 12–32 (LALT…PAML), 41–61 (FGLI…ANTF), 93–113 (VFAW…CHSW), 114–134 (LAAG…TKWL), 141–161 (NVIW…AVIT), 168–188 (FHAG…IFFW), 240–260 (VPAA…WFII), and 290–310 (ILFV…AHAV).

This sequence belongs to the UbiA prenyltransferase family. Protoheme IX farnesyltransferase subfamily.

It localises to the cell membrane. It catalyses the reaction heme b + (2E,6E)-farnesyl diphosphate + H2O = Fe(II)-heme o + diphosphate. The protein operates within porphyrin-containing compound metabolism; heme O biosynthesis; heme O from protoheme: step 1/1. Functionally, converts heme B (protoheme IX) to heme O by substitution of the vinyl group on carbon 2 of heme B porphyrin ring with a hydroxyethyl farnesyl side group. The sequence is that of Protoheme IX farnesyltransferase from Corynebacterium jeikeium (strain K411).